We begin with the raw amino-acid sequence, 761 residues long: Mitochondrial intermediate peptidase (761 aa).

The transit peptide at 1 to 37 (MLIQKILLNKEISRLPRILSILNYTGLRWLSGSSGRN) directs the protein to the mitochondrion. Position 547 (H547) interacts with Zn(2+). Residue E548 is part of the active site. Residues H551 and H554 each coordinate Zn(2+).

This sequence belongs to the peptidase M3 family. Zn(2+) serves as cofactor.

Its subcellular location is the mitochondrion matrix. It carries out the reaction Release of an N-terminal octapeptide as second stage of processing of some proteins imported into the mitochondrion.. Its function is as follows. Cleaves proteins, imported into the mitochondrion, to their mature size. While most mitochondrial precursor proteins are processed to the mature form in one step by mitochondrial processing peptidase (MPP), the sequential cleavage by MIP of an octapeptide after initial processing by MPP is a required step for a subgroup of nuclear-encoded precursor proteins destined for the matrix or the inner membrane. This Candida glabrata (strain ATCC 2001 / BCRC 20586 / JCM 3761 / NBRC 0622 / NRRL Y-65 / CBS 138) (Yeast) protein is Mitochondrial intermediate peptidase (OCT1).